A 304-amino-acid chain; its full sequence is Kazal-type serine protease inhibitor domain-containing protein 1 (304 aa).

The first 30 residues, 1–30 (MLPPPRPAAALALPVLLLLLVVLTPPPTGA), serve as a signal peptide directing secretion. Residues 49 to 129 (EGEGCAPCRP…EVPEPLCACR (81 aa)) enclose the IGFBP N-terminal domain. 7 disulfides stabilise this stretch: cysteine 53–cysteine 76, cysteine 56–cysteine 78, cysteine 61–cysteine 79, cysteine 67–cysteine 82, cysteine 90–cysteine 108, cysteine 102–cysteine 126, and cysteine 135–cysteine 168. Residues 120–170 (EVPEPLCACRSQSPLCGSDGHTYSQICRLQEAARARPDANLTVAHPGPCES) enclose the Kazal-like domain. Residues asparagine 159 and asparagine 183 are each glycosylated (N-linked (GlcNAc...) asparagine). Residues 172-269 (PQIVSHPYDT…GQVEAPASLT (98 aa)) form the Ig-like C2-type domain. Cysteine 193 and cysteine 253 are disulfide-bonded. Residue asparagine 277 is glycosylated (N-linked (GlcNAc...) asparagine).

Its subcellular location is the secreted. The protein resides in the extracellular space. It is found in the extracellular matrix. Its function is as follows. Involved in the proliferation of osteoblasts during bone formation and bone regeneration. Promotes matrix assembly. The chain is Kazal-type serine protease inhibitor domain-containing protein 1 (KAZALD1) from Homo sapiens (Human).